An 87-amino-acid polypeptide reads, in one-letter code: MVKNSVISVISQEEKRGSVEFQVFNFTNKIRRLTSHLELHKKDYLSQRGLKKILGKRQRLLAYLSKKNRVRYKELINQLDIRETKTR.

It belongs to the universal ribosomal protein uS15 family. Part of the 30S ribosomal subunit.

Its subcellular location is the plastid. The protein resides in the chloroplast. The protein is Small ribosomal subunit protein uS15c (rps15) of Nicotiana tabacum (Common tobacco).